Consider the following 965-residue polypeptide: MTTRNLDKLASIDAQLRQLVPAKVSEDDKLVEYDALLLDRFLDILQDLHGEDLKETVQECYELSAEYEAKHDPKKLEELGNVLTSLDPGDSIVIAKAFSHMLNLANLAEEVQIAYRRRQKLKKKGDFGDESNATTESDIEETFKKLVGDLKKSPQEVFDAIKNQTVDLVLTAHPTQSVRRSLLQKHGRIRDCLAQLYAKDITPDDKQELDEALQREIQAAFRTDEIRRTPPTPQDEMRAGMSYFHETIWKGVPKFLRRVDTALKNIGINERVPYNAPLIQFSSWMGGDRDGNPRVTPEVTRDVCLLARMMAANLYYSQIEDLMFELSMWRCNEELRVRADDLQRSSRRDEKHYIEFWKQVPPNEPYRVILGDVRDKLYQTRERARQLLGHGYSEIPEEATYTNIEQFLEPLELCYRSLCACGDLSIADGSLLDFLRQVSTFGLSLVRLDIRQESDRHTDVLDAITQHLEIGSYRDWSEERRQEWLLSELSGKRPLFGPDLPKTEEIADVLDTFHVIAELPADCFGAYIISMATAPSDVLAVELLQRECRVRQPLRVVPLFEKLADLDAAPAAVARLFSIEWYRNRINGKQEVMIGYSDSGKDAGRLSAAWQLYKAQEELIQVAKEFDVKLTMFHGRGGTVGRGGGPAHLAILSQPPETIHGSLRVTVQGEVIEQSFGEEHLCFRTLQRFTAATLEHGMHPPVSPKPEWRALMDEIAVVATEKYRSIVFKEPRFVEYFRLATPELEYGRMNIGSRPSKRKPSGGIESLRAIPWIFAWTQTRFHLPVWLGFGAAFKYAIEKDIKNLRMLQEMYNAWPFFRVTIDLVEMVFAKGDPGIAALFDKLLVSEDLWSFGELLRSKYEETKSLLLQIAGHKDLLEGDPYLKQRLRLRDSYITTLNVCQAYTLKRIRDPDYSVTPRPHISKEYMEAKPATELVNLNPTSEYAPGLEDTLILTMKGIAAGMQNTG.

At Ser11 the chain carries Phosphoserine. Catalysis depends on residues His173 and Lys601.

This sequence belongs to the PEPCase type 1 family. In terms of assembly, homotetramer. Mg(2+) serves as cofactor.

The protein localises to the cytoplasm. It catalyses the reaction oxaloacetate + phosphate = phosphoenolpyruvate + hydrogencarbonate. The protein operates within photosynthesis; C3 acid pathway. Its activity is regulated as follows. By light-reversible phosphorylation. In terms of biological role, through the carboxylation of phosphoenolpyruvate (PEP) it forms oxaloacetate, a four-carbon dicarboxylic acid source for the tricarboxylic acid cycle. The protein is Phosphoenolpyruvate carboxylase (PPC1) of Solanum tuberosum (Potato).